A 228-amino-acid chain; its full sequence is Interleukin-27 subunit beta (228 aa).

An N-terminal signal peptide occupies residues 1–18 (MSKLLFLSLALWASRSPG). 2 consecutive Fibronectin type-III domains span residues 26–124 (ALSQ…VAER) and 127–224 (KPDP…VESA). N-linked (GlcNAc...) asparagine glycosylation is found at N54 and N104.

It belongs to the type I cytokine receptor family. Type 3 subfamily. In terms of assembly, heterodimer with IL27/IL27A; not disulfide-linked. This heterodimer is known as interleukin IL-27. Heterodimer with IL12A; not disulfide-linked. This heterodimer is known as interleukin IL-35. Interacts with SQSTM1.

It localises to the secreted. Functionally, associates with IL27 to form the IL-27 interleukin, a heterodimeric cytokine which functions in innate immunity. IL-27 has pro- and anti-inflammatory properties, that can regulate T-helper cell development, suppress T-cell proliferation, stimulate cytotoxic T-cell activity, induce isotype switching in B-cells, and that has diverse effects on innate immune cells. Among its target cells are CD4 T-helper cells which can differentiate in type 1 effector cells (TH1), type 2 effector cells (TH2) and IL17 producing helper T-cells (TH17). It drives rapid clonal expansion of naive but not memory CD4 T-cells. It also strongly synergizes with IL-12 to trigger interferon-gamma/IFN-gamma production of naive CD4 T-cells, binds to the cytokine receptor WSX-1/TCCR. Another important role of IL-27 is its antitumor activity as well as its antiangiogenic activity with activation of production of antiangiogenic chemokines. The chain is Interleukin-27 subunit beta (Ebi3) from Mus musculus (Mouse).